A 266-amino-acid chain; its full sequence is Proteasome subunit beta type-7 (266 aa).

The propeptide at Met1–Gly34 is removed in mature form. The Nucleophile role is filled by Thr35.

The protein belongs to the peptidase T1B family. As to quaternary structure, the 26S proteasome consists of a 20S proteasome core and two 19S regulatory subunits. The 20S proteasome core is composed of 28 subunits that are arranged in four stacked rings, resulting in a barrel-shaped structure. The two end rings are each formed by seven alpha subunits, and the two central rings are each formed by seven beta subunits. The catalytic chamber with the active sites is on the inside of the barrel.

It localises to the cytoplasm. The protein resides in the nucleus. The catalysed reaction is Cleavage of peptide bonds with very broad specificity.. Functionally, the proteasome is a multicatalytic proteinase complex which is characterized by its ability to cleave peptides with Arg, Phe, Tyr, Leu, and Glu adjacent to the leaving group at neutral or slightly basic pH. The proteasome has an ATP-dependent proteolytic activity. This is Proteasome subunit beta type-7 (psmB7) from Dictyostelium discoideum (Social amoeba).